Reading from the N-terminus, the 405-residue chain is ATP phosphoribosyltransferase regulatory subunit (405 aa).

This sequence belongs to the class-II aminoacyl-tRNA synthetase family. HisZ subfamily. In terms of assembly, heteromultimer composed of HisG and HisZ subunits.

It is found in the cytoplasm. It participates in amino-acid biosynthesis; L-histidine biosynthesis; L-histidine from 5-phospho-alpha-D-ribose 1-diphosphate: step 1/9. In terms of biological role, required for the first step of histidine biosynthesis. May allow the feedback regulation of ATP phosphoribosyltransferase activity by histidine. This Oceanobacillus iheyensis (strain DSM 14371 / CIP 107618 / JCM 11309 / KCTC 3954 / HTE831) protein is ATP phosphoribosyltransferase regulatory subunit.